Consider the following 596-residue polypeptide: A-type ATP synthase subunit A (596 aa).

241–248 (GPFGSGKT) is an ATP binding site.

This sequence belongs to the ATPase alpha/beta chains family. As to quaternary structure, has multiple subunits with at least A(3), B(3), C, D, E, F, H, I and proteolipid K(x).

It is found in the cell membrane. It carries out the reaction ATP + H2O + 4 H(+)(in) = ADP + phosphate + 5 H(+)(out). Component of the A-type ATP synthase that produces ATP from ADP in the presence of a proton gradient across the membrane. The A chain is the catalytic subunit. The sequence is that of A-type ATP synthase subunit A from Ignicoccus hospitalis (strain KIN4/I / DSM 18386 / JCM 14125).